Reading from the N-terminus, the 396-residue chain is Cathepsin D (396 aa).

A signal peptide spans 1 to 18 (MKFLYLFLFAVFAWTSDA). A propeptide spans 19–61 (IVRIPLKKFRSIRRTLSDSGLNVEQLLAGTNSLQHNQGFPSSN) (activation peptide). One can recognise a Peptidase A1 domain in the interval 76-393 (YYGEIGLGTP…DRESNRVGFA (318 aa)). Aspartate 94 is an active-site residue. A disulfide bridge links cysteine 107 with cysteine 114. N-linked (GlcNAc...) asparagine glycosylation occurs at asparagine 131. Residues cysteine 272 and cysteine 276 are joined by a disulfide bond. Residue aspartate 281 is part of the active site. A disulfide bond links cysteine 315 and cysteine 352.

The protein belongs to the peptidase A1 family. Monomer.

The protein localises to the lysosome. It catalyses the reaction Specificity similar to, but narrower than, that of pepsin A. Does not cleave the 4-Gln-|-His-5 bond in B chain of insulin.. With respect to regulation, inhibited by pepstatin. Functionally, acid protease active in intracellular protein breakdown. This chain is Cathepsin D (ctsd), found in Clupea harengus (Atlantic herring).